Reading from the N-terminus, the 445-residue chain is Cytochrome b (445 aa).

At 2–49 the chain is on the cytoplasmic side; that stretch reads SGIPHDHYEPRTGIEKWLHSRLPIVALAYDTIMIPTPRNLNWMWIWGV. A helical transmembrane segment spans residues 50 to 67; it reads VLAFCLVLQIVTGIVLAM. The Periplasmic portion of the chain corresponds to 68 to 94; the sequence is HYTPHVDLAFASVEHIMRNVNGGFMLR. A helical transmembrane segment spans residues 95–113; the sequence is YLHANGASLFFIAVYLHIF. Heme b is bound by residues His-97 and His-111. Topologically, residues 114–129 are cytoplasmic; sequence RGLYYGSYKAPREVTW. Residues 130-149 traverse the membrane as a helical segment; that stretch reads IVGMLIYLAMMATAFMGYVL. The Periplasmic portion of the chain corresponds to 150-193; that stretch reads PWGQMSFWGATVITGLFGAIPGIGHSIQTWLLGGPAVDNATLNR. The helical transmembrane segment at 194-216 threads the bilayer; that stretch reads FFSLHYLLPFVIAALVAIHIWAF. Residues His-198 and His-212 each coordinate heme b. The Cytoplasmic segment spans residues 217-252; sequence HSTGNNNPTGVEVRRTSKAEAQKDTVPFWPYFIIKD. The chain crosses the membrane as a helical span at residues 253–270; that stretch reads VFALAVVLLVFFAIVGFM. At 271–329 the chain is on the periplasmic side; it reads PNYLGHPDNYIEANPLSTPAHIVPEWYFLPFYAILRAFTADVWVVQIANFISFGIIDAK. Residues 330-346 traverse the membrane as a helical segment; the sequence is FFGVLAMFGAILVMALV. Residues 347–364 are Cytoplasmic-facing; the sequence is PWLDTSPVRSGRYRPMFK. The chain crosses the membrane as a helical span at residues 365–382; it reads IYFWLLAADFVILTWVGA. Residues 383–388 are Periplasmic-facing; the sequence is QQTTFP. A helical membrane pass occupies residues 389–408; the sequence is YDWISLIASAYWFAYFLVIL. Residues 409 to 445 lie on the Cytoplasmic side of the membrane; it reads PILGAIEKPVAPPATIEEDFNAHYSPATGGTKTVVAE.

The protein belongs to the cytochrome b family. As to quaternary structure, the main subunits of complex b-c1 are: cytochrome b, cytochrome c1 and the Rieske protein. The cofactor is heme b.

Its subcellular location is the cell membrane. In terms of biological role, component of the ubiquinol-cytochrome c reductase complex (complex III or cytochrome b-c1 complex), which is a respiratory chain that generates an electrochemical potential coupled to ATP synthesis. The sequence is that of Cytochrome b (petB) from Cereibacter sphaeroides (Rhodobacter sphaeroides).